The primary structure comprises 553 residues: Protein Early 65 kDa (553 aa).

The protein localises to the host cytoplasm. Its function is as follows. May participate in the recruitment of G-actin to the host nucleus. The protein is Protein Early 65 kDa (HE65) of Autographa californica nuclear polyhedrosis virus (AcMNPV).